Consider the following 280-residue polypeptide: Late embryogenesis abundant protein 76 (280 aa).

Disordered regions lie at residues 1–156 (MASN…GEAV) and 220–241 (EEED…TDPT). A compositionally biased stretch (basic and acidic residues) spans 28-39 (MRDKAEEGKDKT). LEA 11-mer repeat repeat units follow at residues 31 to 41 (KAEEGKDKTSQ), 53 to 63 (TAQAAKDKTSQ), 75 to 85 (TAQAAKDKTSQ), 97 to 107 (TAQAAKDKTSQ), and 119 to 129 (TTQSSKEKTSQ). The segment covering 40–114 (SQTAQKAQQK…TSQAAQTTQQ (75 aa)) has biased composition (low complexity). 2 stretches are compositionally biased toward basic and acidic residues: residues 115–127 (KAHE…KEKT) and 136–145 (EKARETKDKT). The span at 230-239 (TTTCTTQSTD) shows a compositional bias: low complexity.

This sequence belongs to the LEA type 4 family.

Lea proteins are late embryonic proteins abundant in higher plant seed embryos. The chain is Late embryogenesis abundant protein 76 from Brassica napus (Rape).